The sequence spans 617 residues: Arrestin domain-containing protein B (617 aa).

The C2 domain occupies 1–109 (MDNRGLRLFI…ATFGQTDKWL (109 aa)). Ca(2+) contacts are provided by D20, D27, D76, D78, and D84.

It belongs to the arrestin family. The cofactor is Ca(2+).

In Dictyostelium discoideum (Social amoeba), this protein is Arrestin domain-containing protein B (adcB).